The sequence spans 423 residues: D-tagatose-1,6-bisphosphate aldolase subunit GatZ (423 aa).

The protein belongs to the GatZ/KbaZ family. GatZ subfamily. As to quaternary structure, forms a complex with GatY.

It functions in the pathway carbohydrate metabolism; D-tagatose 6-phosphate degradation; D-glyceraldehyde 3-phosphate and glycerone phosphate from D-tagatose 6-phosphate: step 2/2. Its function is as follows. Component of the tagatose-1,6-bisphosphate aldolase GatYZ that is required for full activity and stability of the Y subunit. Could have a chaperone-like function for the proper and stable folding of GatY. When expressed alone, GatZ does not show any aldolase activity. Is involved in the catabolism of galactitol. The sequence is that of D-tagatose-1,6-bisphosphate aldolase subunit GatZ from Salmonella choleraesuis (strain SC-B67).